We begin with the raw amino-acid sequence, 463 residues long: METSQEPLVTQKKSKPSVWRSMSLFLVPLLLSNVLQSVGQLVGMMAVGRWLGVDAVAAVSSFFPLFFLLISFTIGIGSGSSILIGQAYGAKNEERLKAVVGTTLTFTFLLGVVLAVIGSIFTLDILRLMGTPENVIHVSANYARILFYAMPFMFLYFAYTTFLRGTGDSKTPFYTLIVSTVINIALLPVLILGMFGFPKLGIYGSAYATVISTIATFLVLMVYLRKRKHPLQFDKTVRRYLKMDKELLVLLLRLGVPASINMILVSLSEIAVISFVNHYGSNATAAYGVVNQVASYVQMPAVSLGIAVSIFAAQSIGANEFDRLKQVIRVGIWLNYIIGGVLIILIYVFSHQILSLFLTEQETLYIAHRLLMITLWSYLLFGNAQIISATMRASGTVLWPTVISIFAIWGVEVPVAFVLSHYTKLEILGVWVGYPAAFAVSLLLIYGYYQFVWKKKQITRLIQ.

12 helical membrane passes run 24 to 44 (LFLV…LVGM), 56 to 76 (VAAV…TIGI), 106 to 126 (FTFL…LDIL), 143 to 163 (ARIL…TTFL), 177 to 197 (IVST…MFGF), 202 to 222 (IYGS…VLMV), 256 to 276 (VPAS…ISFV), 293 to 313 (VASY…IFAA), 330 to 350 (VGIW…YVFS), 370 to 390 (LLMI…ISAT), 397 to 417 (VLWP…PVAF), and 427 to 447 (ILGV…LIYG).

The protein belongs to the multi antimicrobial extrusion (MATE) (TC 2.A.66.1) family.

It localises to the cell membrane. This chain is Probable multidrug resistance protein YoeA (yoeA), found in Bacillus subtilis (strain 168).